Here is a 496-residue protein sequence, read N- to C-terminus: FAD-linked oxidoreductase AFUA_1G00980 (496 aa).

The first 21 residues, methionine 1–alanine 21, serve as a signal peptide directing secretion. Residues asparagine 49, asparagine 122, asparagine 205, asparagine 258, asparagine 344, asparagine 351, asparagine 371, and asparagine 382 are each glycosylated (N-linked (GlcNAc...) asparagine). Positions methionine 64–leucine 243 constitute an FAD-binding PCMH-type domain.

It belongs to the oxygen-dependent FAD-linked oxidoreductase family. The cofactor is FAD.

In terms of biological role, FAD-linked oxidoreductase; part of the gene cluster that mediates the biosynthesis of fumigermin that inhibits germination of spores of the inducing S.rapamycinicus, and thus helps the fungus to defend resources in the shared habitat against a bacterial competitor. The partially reducing polyketide synthase fngA alone is sufficient for the production of fumigermin. FgnA catalyzes the condensation of 3 malonyl-CoA units to an acetyl-CoA starter, and 3 methylations to yield fumigermin. It is remarkable that the five cluster genes including fgnA are conserved in distantly related fungi, supporting the assumption of a fumigermin cluster; it is thus possible that originally all five genes were functional, but that the genes encoding tailoring enzymes became inactive from mutations, similar to the case of the fgnA gene in strains A1163 and Af293. The polypeptide is FAD-linked oxidoreductase AFUA_1G00980 (Aspergillus fumigatus (strain ATCC MYA-4609 / CBS 101355 / FGSC A1100 / Af293) (Neosartorya fumigata)).